The following is a 241-amino-acid chain: Queuine tRNA-ribosyltransferase-like protein (241 aa).

This sequence belongs to the queuine tRNA-ribosyltransferase family.

The chain is Queuine tRNA-ribosyltransferase-like protein from Plasmodium falciparum.